Reading from the N-terminus, the 557-residue chain is Dihydroxy-acid dehydratase (557 aa).

Asp78 contributes to the Mg(2+) binding site. Cys119 serves as a coordination point for [2Fe-2S] cluster. The Mg(2+) site is built by Asp120 and Lys121. N6-carboxylysine is present on Lys121. A [2Fe-2S] cluster-binding site is contributed by Cys191. A Mg(2+)-binding site is contributed by Glu442. The active-site Proton acceptor is the Ser468.

The protein belongs to the IlvD/Edd family. As to quaternary structure, homodimer. The cofactor is [2Fe-2S] cluster. Mg(2+) serves as cofactor.

It catalyses the reaction (2R)-2,3-dihydroxy-3-methylbutanoate = 3-methyl-2-oxobutanoate + H2O. It carries out the reaction (2R,3R)-2,3-dihydroxy-3-methylpentanoate = (S)-3-methyl-2-oxopentanoate + H2O. It participates in amino-acid biosynthesis; L-isoleucine biosynthesis; L-isoleucine from 2-oxobutanoate: step 3/4. It functions in the pathway amino-acid biosynthesis; L-valine biosynthesis; L-valine from pyruvate: step 3/4. Functions in the biosynthesis of branched-chain amino acids. Catalyzes the dehydration of (2R,3R)-2,3-dihydroxy-3-methylpentanoate (2,3-dihydroxy-3-methylvalerate) into 2-oxo-3-methylpentanoate (2-oxo-3-methylvalerate) and of (2R)-2,3-dihydroxy-3-methylbutanoate (2,3-dihydroxyisovalerate) into 2-oxo-3-methylbutanoate (2-oxoisovalerate), the penultimate precursor to L-isoleucine and L-valine, respectively. The polypeptide is Dihydroxy-acid dehydratase (Lachnospira eligens (strain ATCC 27750 / DSM 3376 / VPI C15-48 / C15-B4) (Eubacterium eligens)).